The sequence spans 418 residues: Nucleoside permease NupC (418 aa).

The next 9 helical transmembrane spans lie at Ile2–Phe22, Ile34–Gly54, Ile93–Ile113, Ile174–Ala194, Ile198–Ala218, Leu264–Phe284, Leu292–Ala314, Ala354–Gly374, and Val395–Leu415.

It belongs to the concentrative nucleoside transporter (CNT) (TC 2.A.41) family.

Its subcellular location is the cell inner membrane. Involved in purine nucleosides uptake. Could also be involved in uptake of nucleobases. This is Nucleoside permease NupC from Helicobacter pylori (strain ATCC 700392 / 26695) (Campylobacter pylori).